Here is a 213-residue protein sequence, read N- to C-terminus: FMN-dependent NADH:quinone oxidoreductase (213 aa).

Serine 10 contacts FMN.

Belongs to the azoreductase type 1 family. In terms of assembly, homodimer. It depends on FMN as a cofactor.

The enzyme catalyses 2 a quinone + NADH + H(+) = 2 a 1,4-benzosemiquinone + NAD(+). The catalysed reaction is N,N-dimethyl-1,4-phenylenediamine + anthranilate + 2 NAD(+) = 2-(4-dimethylaminophenyl)diazenylbenzoate + 2 NADH + 2 H(+). Its function is as follows. Quinone reductase that provides resistance to thiol-specific stress caused by electrophilic quinones. Also exhibits azoreductase activity. Catalyzes the reductive cleavage of the azo bond in aromatic azo compounds to the corresponding amines. This chain is FMN-dependent NADH:quinone oxidoreductase, found in Opitutus terrae (strain DSM 11246 / JCM 15787 / PB90-1).